The following is a 137-amino-acid chain: uncharacterized protein (137 aa).

Positions 30 to 105 constitute a Sm domain; that stretch reads SLLCVFTALR…IRFIQIPDKI (76 aa).

This is an uncharacterized protein from Dictyostelium discoideum (Social amoeba).